The primary structure comprises 623 residues: Chaperone protein HtpG (623 aa).

An a; substrate-binding region spans residues 1–336 (MVSKQQTMGF…ASDLPLNISR (336 aa)). The b stretch occupies residues 337–550 (EILQDNKQVE…EQDMGLEMQR (214 aa)). The interval 551–623 (ILQAAGQQVP…NRVNRLLVSS (73 aa)) is c.

The protein belongs to the heat shock protein 90 family. Homodimer.

It is found in the cytoplasm. Molecular chaperone. Has ATPase activity. This is Chaperone protein HtpG from Legionella pneumophila (strain Paris).